We begin with the raw amino-acid sequence, 347 residues long: tRNA N6-adenosine threonylcarbamoyltransferase (347 aa).

Residues histidine 113 and histidine 117 each contribute to the Fe cation site. Substrate contacts are provided by residues 136-140, aspartate 170, glycine 183, aspartate 187, and asparagine 282; that span reads LVSGG. Residue aspartate 310 coordinates Fe cation.

The protein belongs to the KAE1 / TsaD family. Fe(2+) is required as a cofactor.

The protein localises to the cytoplasm. It catalyses the reaction L-threonylcarbamoyladenylate + adenosine(37) in tRNA = N(6)-L-threonylcarbamoyladenosine(37) in tRNA + AMP + H(+). In terms of biological role, required for the formation of a threonylcarbamoyl group on adenosine at position 37 (t(6)A37) in tRNAs that read codons beginning with adenine. Is involved in the transfer of the threonylcarbamoyl moiety of threonylcarbamoyl-AMP (TC-AMP) to the N6 group of A37, together with TsaE and TsaB. TsaD likely plays a direct catalytic role in this reaction. The polypeptide is tRNA N6-adenosine threonylcarbamoyltransferase (Cutibacterium acnes (strain DSM 16379 / KPA171202) (Propionibacterium acnes)).